The following is a 190-amino-acid chain: Endoribonuclease YbeY (190 aa).

Residues 1–25 are disordered; that stretch reads MSQPRPGHRPDCNGADPDSNFASMT. 3 residues coordinate Zn(2+): His-147, His-151, and His-157.

It belongs to the endoribonuclease YbeY family. Requires Zn(2+) as cofactor.

Its subcellular location is the cytoplasm. In terms of biological role, single strand-specific metallo-endoribonuclease involved in late-stage 70S ribosome quality control and in maturation of the 3' terminus of the 16S rRNA. The polypeptide is Endoribonuclease YbeY (Rhodopseudomonas palustris (strain ATCC BAA-98 / CGA009)).